Here is a 196-residue protein sequence, read N- to C-terminus: Large ribosomal subunit protein eL15 (196 aa).

A disordered region spans residues 155-196 (THRGRAERGLTSAGKKGRGQRRKGKGTEKNYPSVQAHDRRGK). Residues 169–178 (KKGRGQRRKG) are compositionally biased toward basic residues.

This sequence belongs to the eukaryotic ribosomal protein eL15 family.

This is Large ribosomal subunit protein eL15 from Methanocella arvoryzae (strain DSM 22066 / NBRC 105507 / MRE50).